A 295-amino-acid polypeptide reads, in one-letter code: Iodotyrosine deiodinase (295 aa).

Residues 3–23 traverse the membrane as a helical segment; sequence VFSSLTPVFVAVLCVIIGFLF. Residues 29-81 are disordered; that stretch reads KESRSKQKPSDQTARPWVDEDLQDDTEISTKDNEENNEDWMDTTDEENLPHVP. Over residues 63 to 75 the composition is skewed to acidic residues; it reads ENNEDWMDTTDEE. Residues 106-110, Ser-134, and 134-135 contribute to the FMN site; these read RRSVR and SG. Residues Ala-136, Glu-163, Tyr-167, and Lys-188 each contribute to the 3-iodo-L-tyrosine site. Residues 243 to 245 and Arg-285 contribute to the FMN site; that span reads TTT.

This sequence belongs to the nitroreductase family. The cofactor is FMN.

It localises to the membrane. It carries out the reaction 2 iodide + L-tyrosine + 2 NADP(+) = 3,5-diiodo-L-tyrosine + 2 NADPH + H(+). It catalyses the reaction iodide + L-tyrosine + NADP(+) = 3-iodo-L-tyrosine + NADPH. The enzyme catalyses 3-iodo-L-tyrosine + iodide + NADP(+) = 3,5-diiodo-L-tyrosine + NADPH + H(+). The catalysed reaction is L-tyrosine + chloride + NADP(+) = 3-chloro-L-tyrosine + NADPH. It carries out the reaction bromide + L-tyrosine + NADP(+) = 3-bromo-L-tyrosine + NADPH. Functionally, catalyzes the dehalogenation of halotyrosines such as 3,5-diiodo-L-tyrosine. Likely to also catalyze the dehalogenation of other halotyrosines such as 3-bromo-L-tyrosine, 3-chloro-L-tyrosine and 3-iodo-L-tyrosine. The protein is Iodotyrosine deiodinase (iyd) of Danio rerio (Zebrafish).